Here is a 212-residue protein sequence, read N- to C-terminus: Translation initiation factor IF-3 (212 aa).

Positions 171–212 (PKSASKKGHTPPKTQVEASKQANESAETEEEKKRCHPTKPVL) are disordered. Residues 182–195 (PKTQVEASKQANES) are compositionally biased toward polar residues.

The protein belongs to the IF-3 family. As to quaternary structure, monomer.

The protein resides in the cytoplasm. In terms of biological role, IF-3 binds to the 30S ribosomal subunit and shifts the equilibrium between 70S ribosomes and their 50S and 30S subunits in favor of the free subunits, thus enhancing the availability of 30S subunits on which protein synthesis initiation begins. This Porphyromonas gingivalis (strain ATCC 33277 / DSM 20709 / CIP 103683 / JCM 12257 / NCTC 11834 / 2561) protein is Translation initiation factor IF-3.